A 150-amino-acid polypeptide reads, in one-letter code: 3-dehydroquinate dehydratase (150 aa).

Tyr26 serves as the catalytic Proton acceptor. Substrate contacts are provided by Asn75, His81, and Asp88. His101 functions as the Proton donor in the catalytic mechanism. Substrate is bound by residues 102–103 (LS) and Arg112.

The protein belongs to the type-II 3-dehydroquinase family. Homododecamer.

The enzyme catalyses 3-dehydroquinate = 3-dehydroshikimate + H2O. It participates in metabolic intermediate biosynthesis; chorismate biosynthesis; chorismate from D-erythrose 4-phosphate and phosphoenolpyruvate: step 3/7. Its function is as follows. Catalyzes a trans-dehydration via an enolate intermediate. The protein is 3-dehydroquinate dehydratase of Shewanella loihica (strain ATCC BAA-1088 / PV-4).